We begin with the raw amino-acid sequence, 182 residues long: UPF0316 protein BCQ_3166 (182 aa).

3 helical membrane-spanning segments follow: residues 6–26 (LIFV…ILLV), 32–52 (SAAA…GIVF), and 58–78 (WMNI…GGYI).

This sequence belongs to the UPF0316 family.

Its subcellular location is the cell membrane. In Bacillus cereus (strain Q1), this protein is UPF0316 protein BCQ_3166.